A 161-amino-acid chain; its full sequence is MPSFDIVSEVDKQEVRNAIDQVNKEVGTRFDFKGSDARVEQADYTLTVFADDEFKLDQVFDILTTKLAKRNVDVRSLDKGQVEKISGNKVKQLVTVKTGVESELAKKIIRLIKDSKLKVQGSIQGETVRVSGAKRDTLQEAIQLVKKSVTDFPLQFQNFRD.

Belongs to the YajQ family.

In terms of biological role, nucleotide-binding protein. This Nitrosospira multiformis (strain ATCC 25196 / NCIMB 11849 / C 71) protein is Nucleotide-binding protein Nmul_A1044.